The sequence spans 200 residues: Lipopolysaccharide core heptose(II)-phosphate phosphatase (200 aa).

The first 25 residues, 1–25 (MLAFCRSSLKSKKYFIILLALAAIA), serve as a signal peptide directing secretion.

It belongs to the phosphoglycerate mutase family. Ais subfamily.

It is found in the periplasm. The protein operates within bacterial outer membrane biogenesis; lipopolysaccharide metabolism. In terms of biological role, catalyzes the dephosphorylation of heptose(II) of the outer membrane lipopolysaccharide core. This Shigella flexneri serotype 5b (strain 8401) protein is Lipopolysaccharide core heptose(II)-phosphate phosphatase.